The following is a 507-amino-acid chain: Probable aldehyde dehydrogenase (507 aa).

219 to 225 provides a ligand contact to NAD(+); that stretch reads GFGVEAG. Active-site residues include Glu-263 and Cys-302.

Belongs to the aldehyde dehydrogenase family.

It catalyses the reaction an aldehyde + NAD(+) + H2O = a carboxylate + NADH + 2 H(+). The polypeptide is Probable aldehyde dehydrogenase (Streptomyces coelicolor (strain ATCC BAA-471 / A3(2) / M145)).